A 183-amino-acid polypeptide reads, in one-letter code: Large ribosomal subunit protein uL6 (183 aa).

Belongs to the universal ribosomal protein uL6 family. Part of the 50S ribosomal subunit.

Functionally, this protein binds to the 23S rRNA, and is important in its secondary structure. It is located near the subunit interface in the base of the L7/L12 stalk, and near the tRNA binding site of the peptidyltransferase center. The protein is Large ribosomal subunit protein uL6 of Chlamydia muridarum (strain MoPn / Nigg).